A 370-amino-acid chain; its full sequence is Prolactin-releasing peptide receptor (370 aa).

A disordered region spans residues 1–34 (MTSLPPGTTGDPDLFSGPSPAGSTPANQSAEASE). Over 1 to 62 (MTSLPPGTTG…LQLVHQLKGL (62 aa)) the chain is Extracellular. The segment covering 21-34 (AGSTPANQSAEASE) has biased composition (polar residues). N-linked (GlcNAc...) asparagine glycans are attached at residues Asn27 and Asn36. The helical transmembrane segment at 63-83 (IVMLYSIVVVVGLVGNCLLVL) threads the bilayer. The Cytoplasmic segment spans residues 84–101 (VIARVRRLHNVTNFLIGN). A helical transmembrane segment spans residues 102 to 122 (LALSDVLMCAACVPLTLAYAF). Over 123-126 (EPRG) the chain is Extracellular. The helical transmembrane segment at 127–147 (WVFGGGLCHLVFFLQPVTVYV) threads the bilayer. Cys134 and Cys211 form a disulfide bridge. Topologically, residues 148–175 (SVFTLTTIAVDRYVVLVHPLRRRISLKL) are cytoplasmic. Residues 176-196 (SAYAVLGIWALSAVLALPAAV) form a helical membrane-spanning segment. At 197 to 223 (HTYHVELKPHDVRLCEEFWGSQERQRQ) the chain is on the extracellular side. A helical membrane pass occupies residues 224–244 (IYAWGLLLGTYLLPLLAILLS). Residues 245-276 (YVRVSVKLRNRVVPGSVTQSQADWDRARRRRT) are Cytoplasmic-facing. Residues 277-297 (FCLLVVVVVVFALCWLPLHIF) traverse the membrane as a helical segment. Residues 298–317 (NLLRDLDPRAIDPYAFGLVQ) are Extracellular-facing. Residues 318–338 (LLCHWLAMSSACYNPFIYAWL) traverse the membrane as a helical segment. At 339-370 (HDSFREELRKMLLSWPRKIVPHGQNMTVSVVI) the chain is on the cytoplasmic side. A required for interaction with GRIP1, GRIP2 and PICK1 region spans residues 365–370 (TVSVVI).

The protein belongs to the G-protein coupled receptor 1 family. Interacts through its C-terminal region with the PDZ domain-containing proteins GRIP1, GRIP2 and PICK1. Interacts with PDZ domains 4 and 5 of GRIP1 and with the PDZ domain of PICK1. In terms of tissue distribution, widely expressed, with highest levels in pituitary, cerebellum, and hypothalamus.

The protein resides in the cell membrane. In terms of biological role, receptor for prolactin-releasing peptide (PrRP). Implicated in lactation, regulation of food intake and pain-signal processing. The chain is Prolactin-releasing peptide receptor (Prlhr) from Rattus norvegicus (Rat).